The primary structure comprises 207 residues: Superoxide dismutase [Fe] (207 aa).

Fe cation-binding residues include His-28, His-76, Asp-160, and His-164.

This sequence belongs to the iron/manganese superoxide dismutase family. In terms of assembly, homotetramer. Fe cation serves as cofactor.

Its subcellular location is the secreted. The catalysed reaction is 2 superoxide + 2 H(+) = H2O2 + O2. In terms of biological role, destroys superoxide anion radicals which are normally produced within the cells and which are toxic to biological systems. The protein is Superoxide dismutase [Fe] (sodB) of Mycobacterium tuberculosis (strain CDC 1551 / Oshkosh).